Here is a 98-residue protein sequence, read N- to C-terminus: PsbF-like protein (98 aa).

The next 2 membrane-spanning stretches (helical) occupy residues 5-25 (VLLV…WLGK) and 73-93 (TAAV…ILAM).

It belongs to the PsbE/PsbF family.

It localises to the membrane. In terms of biological role, unknown. Resembles PsbF, one of the subunits of the photosystem II reaction center. However, it encodes asparagine rather than histidine at the site PsbF uses to bind heme. The polypeptide is PsbF-like protein (Prochlorococcus marinus (strain MIT 9312)).